The primary structure comprises 156 residues: Peptide methionine sulfoxide reductase MsrA (156 aa).

The active site involves Cys10.

Belongs to the MsrA Met sulfoxide reductase family.

It carries out the reaction L-methionyl-[protein] + [thioredoxin]-disulfide + H2O = L-methionyl-(S)-S-oxide-[protein] + [thioredoxin]-dithiol. It catalyses the reaction [thioredoxin]-disulfide + L-methionine + H2O = L-methionine (S)-S-oxide + [thioredoxin]-dithiol. Its function is as follows. Has an important function as a repair enzyme for proteins that have been inactivated by oxidation. Catalyzes the reversible oxidation-reduction of methionine sulfoxide in proteins to methionine. The chain is Peptide methionine sulfoxide reductase MsrA from Metamycoplasma arthritidis (strain 158L3-1) (Mycoplasma arthritidis).